Reading from the N-terminus, the 220-residue chain is Large ribosomal subunit protein uL16 (220 aa).

It belongs to the universal ribosomal protein uL16 family. In terms of assembly, component of the small ribosomal subunit. Mature ribosomes consist of a small (40S) and a large (60S) subunit. The 40S subunit contains about 33 different proteins and 1 molecule of RNA (18S). The 60S subunit contains about 49 different proteins and 3 molecules of RNA (25S, 5.8S and 5S).

The protein is Large ribosomal subunit protein uL16 (RPL10) of Zea mays (Maize).